We begin with the raw amino-acid sequence, 535 residues long: uncharacterized protein (535 aa).

The helical transmembrane segment at 17 to 37 threads the bilayer; the sequence is IVLLCMIGFFCTTFMRIHFAL. Residues N44 and N61 are each glycosylated (N-linked (GlcNAc...) asparagine). Transmembrane regions (helical) follow at residues 107–127, 144–164, 167–187, 199–219, 225–245, and 292–312; these read LIFSGTFWGSLITVLPSMFFI, ILVTVITPFLATHFGYFSVFL, IGMGLGEGFVFPTNNAIIGNW, IFTLGNQIASAAGSPMVAAVC, WPATFYFAGIFATGWSILWFF, and AFLGQLQCHFFVNLFMTLFQI. An N-linked (GlcNAc...) asparagine glycan is attached at N329. 5 consecutive transmembrane segments (helical) span residues 331–351, 368–388, 395–415, 429–451, and 463–483; these read TFTAIPNIFNMIFKVVWGIGI, VSHGVASFGSSFSLILLAFFV, TGLIFFCLMYSSMGTFVSGFY, MSAISMFVAMIGRLTTPAVMSMF, and IFIGCSLAHIFSGSIFLLFGS.

Belongs to the major facilitator superfamily. Sodium/anion cotransporter family.

The protein localises to the membrane. This is an uncharacterized protein from Caenorhabditis elegans.